A 147-amino-acid polypeptide reads, in one-letter code: Glucosamine 6-phosphate N-acetyltransferase (147 aa).

Positions 7-147 (LELRVLEESD…AHERQMRLDL (141 aa)) constitute an N-acetyltransferase domain. D-glucosamine 6-phosphate is bound by residues threonine 28 and 86 to 88 (EDV). Residues 88–90 (VVV) and 96–101 (GAGLGK) each bind acetyl-CoA. D-glucosamine 6-phosphate contacts are provided by residues 117–118 (YK) and aspartate 122. 131-133 (YEK) is an acetyl-CoA binding site.

Belongs to the acetyltransferase family. GNA1 subfamily. Homodimer. Post-translationally, contains poly-N-acetyllactosamines.

The protein resides in the glycosome. The enzyme catalyses D-glucosamine 6-phosphate + acetyl-CoA = N-acetyl-D-glucosamine 6-phosphate + CoA + H(+). Its pathway is nucleotide-sugar biosynthesis; UDP-N-acetyl-alpha-D-glucosamine biosynthesis; N-acetyl-alpha-D-glucosamine 1-phosphate from alpha-D-glucosamine 6-phosphate (route I): step 1/2. Involved in the biosynthesis of UDP-N-acetyl-alpha-D-glucosamine. Catalyzes the formation of N-acetyl-D-glucosamine 6-phosphate from acetyl-coenzyme A (acetyl-CoA) and D-glucosamine 6-phosphate. This Trypanosoma brucei brucei protein is Glucosamine 6-phosphate N-acetyltransferase.